Reading from the N-terminus, the 323-residue chain is Olfactory receptor 2AE1 (323 aa).

Residues 1–25 (MWQKNQTSLADFILEGLFDDSLTHL) lie on the Extracellular side of the membrane. An N-linked (GlcNAc...) asparagine glycan is attached at N5. A helical transmembrane segment spans residues 26–49 (FLFSLTMVVFLIAVSGNTLTILLI). Residues 50-57 (CIDPQLHT) are Cytoplasmic-facing. The helical transmembrane segment at 58–79 (PMYFLLSQLSLMDLMHVSTIIL) threads the bilayer. Topologically, residues 80-100 (KMATNYLSGKKSISFVGCATQ) are extracellular. C97 and C189 are oxidised to a cystine. Residues 101 to 120 (HFLYLCLGGAECFLLAVMSY) form a helical membrane-spanning segment. Over 121–139 (DRYVAICHPLRYAVLMNKK) the chain is Cytoplasmic. The chain crosses the membrane as a helical span at residues 140-158 (VGLMMAVMSWLGASVNSLI). Residues 159–195 (HMAILMHFPFCGPRKVYHFYCEFPAVVKLVCGDITVY) lie on the Extracellular side of the membrane. Residues 196–218 (ETTVYISSILLLLPIFLISTSYV) traverse the membrane as a helical segment. Over 219-235 (FILQSVIQMRSSGSKRN) the chain is Cytoplasmic. A helical transmembrane segment spans residues 236-258 (AFATCGSHLTVVSLWFGACIFSY). Topologically, residues 259–271 (MRPRSQCTLLQNK) are extracellular. A helical transmembrane segment spans residues 272–291 (VGSVFYSIITPTLNSLIYTL). Residues 292–323 (RNKDVAKALRRVLRRDVITQCIQRLQLWLPRV) lie on the Cytoplasmic side of the membrane.

This sequence belongs to the G-protein coupled receptor 1 family.

It localises to the cell membrane. In terms of biological role, odorant receptor. This is Olfactory receptor 2AE1 (OR2AE1) from Homo sapiens (Human).